We begin with the raw amino-acid sequence, 179 residues long: Inner membrane-spanning protein YciB (179 aa).

A run of 5 helical transmembrane segments spans residues 22–42 (IYAATTALIVATAVVLIYSWV), 50–70 (MALITFVLVAVFGGLTIFFHN), 76–96 (WKVTVIYALFAGALLFSQWVM), 121–141 (LAWAVFFILCGLANIYIAFWL), and 149–169 (FKVFGLTALTLVFTLLSGIYI).

This sequence belongs to the YciB family.

Its subcellular location is the cell inner membrane. Functionally, plays a role in cell envelope biogenesis, maintenance of cell envelope integrity and membrane homeostasis. This chain is Inner membrane-spanning protein YciB, found in Klebsiella pneumoniae subsp. pneumoniae (strain ATCC 700721 / MGH 78578).